The primary structure comprises 103 residues: Pyrimidine/purine nucleoside phosphorylase (103 aa).

The protein belongs to the nucleoside phosphorylase PpnP family.

The enzyme catalyses a purine D-ribonucleoside + phosphate = a purine nucleobase + alpha-D-ribose 1-phosphate. It carries out the reaction adenosine + phosphate = alpha-D-ribose 1-phosphate + adenine. It catalyses the reaction cytidine + phosphate = cytosine + alpha-D-ribose 1-phosphate. The catalysed reaction is guanosine + phosphate = alpha-D-ribose 1-phosphate + guanine. The enzyme catalyses inosine + phosphate = alpha-D-ribose 1-phosphate + hypoxanthine. It carries out the reaction thymidine + phosphate = 2-deoxy-alpha-D-ribose 1-phosphate + thymine. It catalyses the reaction uridine + phosphate = alpha-D-ribose 1-phosphate + uracil. The catalysed reaction is xanthosine + phosphate = alpha-D-ribose 1-phosphate + xanthine. Its function is as follows. Catalyzes the phosphorolysis of diverse nucleosides, yielding D-ribose 1-phosphate and the respective free bases. Can use uridine, adenosine, guanosine, cytidine, thymidine, inosine and xanthosine as substrates. Also catalyzes the reverse reactions. The protein is Pyrimidine/purine nucleoside phosphorylase of Methylococcus capsulatus (strain ATCC 33009 / NCIMB 11132 / Bath).